Reading from the N-terminus, the 357-residue chain is Glutamine synthetase root isozyme A (357 aa).

Residues 19-99 (IIAEYIWVGG…VICDVYTPAG (81 aa)) enclose the GS beta-grasp domain. The 252-residue stretch at 106–357 (KRYNAAKIFS…AETTILWKKP (252 aa)) folds into the GS catalytic domain.

Belongs to the glutamine synthetase family. As to quaternary structure, homooctamer.

The protein resides in the cytoplasm. The enzyme catalyses L-glutamate + NH4(+) + ATP = L-glutamine + ADP + phosphate + H(+). The chain is Glutamine synthetase root isozyme A (GS3A) from Pisum sativum (Garden pea).